The primary structure comprises 443 residues: ATP-dependent protease ATPase subunit HslU (443 aa).

ATP contacts are provided by residues isoleucine 18 and 60–65 (GVGKTE). Residues 141–165 (DQWGQNEENDTDSSTRQSFRKKLRE) form a disordered region. The ATP site is built by aspartate 256, glutamate 321, and arginine 393.

It belongs to the ClpX chaperone family. HslU subfamily. As to quaternary structure, a double ring-shaped homohexamer of HslV is capped on each side by a ring-shaped HslU homohexamer. The assembly of the HslU/HslV complex is dependent on binding of ATP.

It localises to the cytoplasm. In terms of biological role, ATPase subunit of a proteasome-like degradation complex; this subunit has chaperone activity. The binding of ATP and its subsequent hydrolysis by HslU are essential for unfolding of protein substrates subsequently hydrolyzed by HslV. HslU recognizes the N-terminal part of its protein substrates and unfolds these before they are guided to HslV for hydrolysis. This Photobacterium profundum (strain SS9) protein is ATP-dependent protease ATPase subunit HslU.